We begin with the raw amino-acid sequence, 312 residues long: Deoxyribonuclease Tat-D (312 aa).

A divalent metal cation-binding residues include E124, H161, H187, and D235.

It belongs to the metallo-dependent hydrolases superfamily. TatD-type hydrolase family. The cofactor is a divalent metal cation.

The protein resides in the cytoplasm. The protein localises to the nucleus. In terms of biological role, has both endo- and exonuclease activities. Incises double-stranded DNA without obvious specificity via its endonuclease activity and excises the DNA from the 3'-to 5'-end by its exonuclease activity. May have a role in apoptosis. The protein is Deoxyribonuclease Tat-D of Schizosaccharomyces pombe (strain 972 / ATCC 24843) (Fission yeast).